Here is a 689-residue protein sequence, read N- to C-terminus: DNA ligase (689 aa).

Residues D40–D44, S89–L90, and E121 each bind NAD(+). The active-site N6-AMP-lysine intermediate is K123. Residues R144, E179, K295, and K319 each contribute to the NAD(+) site. Zn(2+) is bound by residues C413, C416, C431, and C437. One can recognise a BRCT domain in the interval R610 to A689.

The protein belongs to the NAD-dependent DNA ligase family. LigA subfamily. Mg(2+) is required as a cofactor. The cofactor is Mn(2+).

The enzyme catalyses NAD(+) + (deoxyribonucleotide)n-3'-hydroxyl + 5'-phospho-(deoxyribonucleotide)m = (deoxyribonucleotide)n+m + AMP + beta-nicotinamide D-nucleotide.. In terms of biological role, DNA ligase that catalyzes the formation of phosphodiester linkages between 5'-phosphoryl and 3'-hydroxyl groups in double-stranded DNA using NAD as a coenzyme and as the energy source for the reaction. It is essential for DNA replication and repair of damaged DNA. This is DNA ligase from Rickettsia prowazekii (strain Madrid E).